A 240-amino-acid polypeptide reads, in one-letter code: Probable transcriptional regulatory protein PBPRB1582 (240 aa).

Belongs to the TACO1 family.

Its subcellular location is the cytoplasm. This Photobacterium profundum (strain SS9) protein is Probable transcriptional regulatory protein PBPRB1582.